Consider the following 340-residue polypeptide: DNA-directed RNA polymerase subunit alpha (340 aa).

Positions 1 to 237 (MSSDELVYMN…EQMNPFINFD (237 aa)) are alpha N-terminal domain (alpha-NTD). An alpha C-terminal domain (alpha-CTD) region spans residues 256–340 (FNENLYRSVD…PEEDQIKEGE (85 aa)).

This sequence belongs to the RNA polymerase alpha chain family. In terms of assembly, homodimer. The RNAP catalytic core consists of 2 alpha, 1 beta, 1 beta' and 1 omega subunit. When a sigma factor is associated with the core the holoenzyme is formed, which can initiate transcription.

It carries out the reaction RNA(n) + a ribonucleoside 5'-triphosphate = RNA(n+1) + diphosphate. DNA-dependent RNA polymerase catalyzes the transcription of DNA into RNA using the four ribonucleoside triphosphates as substrates. The sequence is that of DNA-directed RNA polymerase subunit alpha from Desulforapulum autotrophicum (strain ATCC 43914 / DSM 3382 / VKM B-1955 / HRM2) (Desulfobacterium autotrophicum).